Here is a 187-residue protein sequence, read N- to C-terminus: uncharacterized protein (187 aa).

The chain crosses the membrane as a helical span at residues 8–28 (FFILLAINFILAAGFVALVLL).

The protein resides in the membrane. This is an uncharacterized protein from Bacillus subtilis (strain 168).